The chain runs to 631 residues: MSTTTLTRREQRAKAQHFIDTLEGTAFPNSKRIYVTGSQHDIRVPMREIQLSPTLIGGSKDNPQFEENEAVPVYDTSGPYGDPEVAINVQQGLAKLRQPWIDARNDSEELDDRSSAYTRERLADDGLDDLRFTGLLTPKRAKAGKRVTQLHYARNGIVTPEMEFIAIRENMGRERIRSEVLRHQHPGMSFGARLPENITPEFVRDEVAAGRAIIPANINHPESEPMIIGRNFLVKVNANIGNSAVTSSIEEEVEKLVWATRWGADTVMDLSTGRYIHETREWILRNSPVPIGTVPIYQALEKVNGIAEDLTWEAFRDTLLEQAEQGVDYFTIHAGVLLRYVPMTAKRLTGIVSRGGSIMAKWCLSHHKENFLFEHFREICEICAAYDVSLSLGDGLRPGSIQDANDEAQFSELHTLGELTKIAWEYDVQVMIEGPGHVPMHMIQRNMTEELEHCHEAPFYTLGPLTTDIAPGYDHFTSGIGAAMIGWFGCAMLCYVTPKEHLGLPNKEDVKQGLITYKIAAHAADLAKGHPGAQIRDNAMSKARFEFRWEDQFNLALDPFTARAWHDETLPQESGKVAHFCSMCGPKFCSMKISQEVRDYAAAQTIEVGMADMSENFRAKGGEIYLKREEV.

Residues Asn239, Met268, Tyr297, His333, 353–355 (SRG), 394–397 (DGLR), and Glu433 contribute to the substrate site. Residue His437 participates in Zn(2+) binding. Tyr460 lines the substrate pocket. His501 provides a ligand contact to Zn(2+). Residues Cys581, Cys584, and Cys589 each contribute to the [4Fe-4S] cluster site.

This sequence belongs to the ThiC family. Homodimer. The cofactor is [4Fe-4S] cluster.

It catalyses the reaction 5-amino-1-(5-phospho-beta-D-ribosyl)imidazole + S-adenosyl-L-methionine = 4-amino-2-methyl-5-(phosphooxymethyl)pyrimidine + CO + 5'-deoxyadenosine + formate + L-methionine + 3 H(+). It participates in cofactor biosynthesis; thiamine diphosphate biosynthesis. Its function is as follows. Catalyzes the synthesis of the hydroxymethylpyrimidine phosphate (HMP-P) moiety of thiamine from aminoimidazole ribotide (AIR) in a radical S-adenosyl-L-methionine (SAM)-dependent reaction. This Salmonella schwarzengrund (strain CVM19633) protein is Phosphomethylpyrimidine synthase.